An 80-amino-acid chain; its full sequence is Large ribosomal subunit protein bL31B (80 aa).

This sequence belongs to the bacterial ribosomal protein bL31 family. Type B subfamily. In terms of assembly, part of the 50S ribosomal subunit.

This is Large ribosomal subunit protein bL31B from Xylella fastidiosa (strain 9a5c).